The following is a 512-amino-acid chain: MLFEGLELVSALATLAACLVSVTLLLAVSQQLWQLRWAATRDKSCKLPIPKGSMGFPLIGETGHWLLQGSGFQSSRREKYGNVFKTHLLGRPLIRVTGAENVRKILLGEHQLVSTEWPRSARVLLGPNTVANSIGDIHRNKRKVFSKIFSHEALESYLPKIQLVIQDTLRAWSSQPEAINVYQEAQRLTFRMAVRVLLGFSIPEEDLGHLFEVYQQFVENVFSLPVDLPFSGYRRGIQARQILQKGLEKAIREKLQCTQGKDYSDALDILIESSKEHGKEMTMQELKDGTLELIFAAYATTASASTSLIMQLLKHPAVLEKLREELRAQGLLHGGGCPCEGTLRLDTLSSLRYLDCVIKEVMRLFTPVSGGYRTVLQTFELDGFQIPKGWSVMYSIRDTHDTAPVFKDVNVFDPDRFSQARSEDKDGRFHYLPFGGGVRTCLGKHLAKLFLKVLAVELASTSRFELATRTFPRITLVPVLHPVDGLSVKFFGLDSNQNEILPETEAMLSATV.

Cysteine 441 serves as a coordination point for heme.

Belongs to the cytochrome P450 family. Heme serves as cofactor.

It localises to the endoplasmic reticulum membrane. The protein localises to the microsome membrane. The catalysed reaction is all-trans-retinoate + reduced [NADPH--hemoprotein reductase] + O2 = all-trans-4-hydroxyretinoate + oxidized [NADPH--hemoprotein reductase] + H2O + H(+). It catalyses the reaction all-trans-retinoate + reduced [NADPH--hemoprotein reductase] + O2 = all-trans-18-hydroxyretinoate + oxidized [NADPH--hemoprotein reductase] + H2O + H(+). Its function is as follows. A cytochrome P450 monooxygenase involved in the metabolism of retinoates (RAs), the active metabolites of vitamin A, and critical signaling molecules in animals. RAs exist as at least four different isomers: all-trans-RA (atRA), 9-cis-RA, 13-cis-RA, and 9,13-dicis-RA, where atRA is considered to be the biologically active isomer, although 9-cis-RA and 13-cis-RA also have activity. Catalyzes the hydroxylation of atRA primarily at C-4 and C-18, thereby contributing to the regulation of atRA homeostasis and signaling. Hydroxylation of atRA limits its biological activity and initiates a degradative process leading to its eventual elimination. Involved in the convertion of atRA to all-trans-4-oxo-RA. Can oxidize all-trans-13,14-dihydroretinoate (DRA) to metabolites which could include all-trans-4-oxo-DRA, all-trans-4-hydroxy-DRA, all-trans-5,8-epoxy-DRA, and all-trans-18-hydroxy-DRA. Shows preference for the following substrates: atRA &gt; 9-cis-RA &gt; 13-cis-RA. Plays a central role in germ cell development: acts by degrading RAs in the developing testis, preventing STRA8 expression, thereby leading to delay of meiosis. Required for the maintenance of the undifferentiated state of male germ cells during embryonic development in Sertoli cells, inducing arrest in G0 phase of the cell cycle and preventing meiotic entry. Plays a role in skeletal development, both at the level of patterning and in the ossification of bone and the establishment of some synovial joints. Essential for postnatal survival. In terms of biological role, also has a significant activity in oxidation of tazarotenic acid and may therefore metabolize that xenobiotic in vivo. The sequence is that of Cytochrome P450 26B1 (Cyp26b1) from Mus musculus (Mouse).